A 322-amino-acid chain; its full sequence is 6-deoxy-6-sulfo-D-fructose transketolase subunit SqwH (322 aa).

This sequence belongs to the transketolase family. In terms of assembly, forms a complex with SqwG. Thiamine diphosphate serves as cofactor.

It carries out the reaction 6-deoxy-6-sulfo-D-fructose + D-glyceraldehyde 3-phosphate = 4-deoxy-4-sulfo-D-erythrose + D-xylulose 5-phosphate. It catalyses the reaction 4-deoxy-4-sulfo-D-erythrulose + D-glyceraldehyde 3-phosphate = sulfoacetaldehyde + D-xylulose 5-phosphate. Its function is as follows. Part of the sulfo-TK pathway, a D-sulfoquinovose degradation pathway that produces 2-hydroxyethane-1-sulfonate (isethionate). Catalyzes two steps of the pathway: the formation of 4-deoxy-4-sulfoerythrose (SE) and xylulose 5-phosphate from 6-deoxy-6-sulfo-D-fructose (SF) and glyceraldehyde 3-phosphate, and the formation of sulfoacetaldehyde (SA) and xylulose 5-phosphate from 4-deoxy-4-sulfo-D-erythrulose (SEu) and glyceraldehyde 3-phosphate. The chain is 6-deoxy-6-sulfo-D-fructose transketolase subunit SqwH from Clostridium sp. (strain MSTE9).